Reading from the N-terminus, the 272-residue chain is Aquaporin-1 (272 aa).

The Cytoplasmic portion of the chain corresponds to 1–11 (MASEFKKKLFW). The helical transmembrane segment at 12–29 (RAVVAEFLAMILFIFISI) threads the bilayer. The Extracellular portion of the chain corresponds to 30 to 48 (GSALGFHYPIKSNQTTGAV). The N-linked (GlcNAc...) asparagine glycan is linked to asparagine 42. The chain crosses the membrane as a helical span at residues 49-67 (QDNVKVSLAFGLSIATLAQ). Residues 68–70 (SVG) are Cytoplasmic-facing. Residues 71 to 84 (HISGAHLNPAVTLG) lie within the membrane without spanning it. Residues 78 to 80 (NPA) carry the NPA 1 motif. Topologically, residues 85 to 92 (LLLSCQIS) are cytoplasmic. The chain crosses the membrane as a helical span at residues 93–111 (ILRAIMYIIAQCVGAIVAT). The Extracellular segment spans residues 112-135 (VILSGITSSLPDNSLGLNALAPGV). A helical membrane pass occupies residues 136–155 (NSGQGLGIEIIGTLQLVLCV). Residues 156-166 (LATTDRRRRRD) are Cytoplasmic-facing. Residues 167–184 (LGDSGPLAIGFSVALGHL) traverse the membrane as a helical segment. Over 185-189 (LAIDY) the chain is Extracellular. Residues 190-202 (TGCGINPARSFGS) lie within the membrane without spanning it. The short motif at 195 to 197 (NPA) is the NPA 2 element. The Extracellular portion of the chain corresponds to 203–209 (SVITHNF). A helical membrane pass occupies residues 210 to 227 (QDHWIFWVGPFIGAALAV). At 228 to 272 (LIYDFILAPRSSDLTDRVKVWTSGQVEEYDLDADDINSRVEMKPK) the chain is on the cytoplasmic side. Serine 250 is modified (phosphoserine). Residue tyrosine 256 is modified to Phosphotyrosine. Serine 265 carries the phosphoserine modification.

It belongs to the MIP/aquaporin (TC 1.A.8) family. As to quaternary structure, homotetramer; each monomer provides an independent water pore. Component of the ankyrin-1 complex in the erythrocyte, composed of ANK1, RHCE, RHAG, SLC4A1, EPB42, GYPA, GYPB and AQP1. Interacts with EPHB2; involved in endolymph production in the inner ear. Identified in a complex with STOM. Interacts (via the N-terminal) with ANK1 (via ANK 1-5 repeats). Interacts (via the C-terminal) with EPB42. In terms of tissue distribution, detected in fetal kidney (at protein level). Detected in fetal kidney.

It localises to the cell membrane. The enzyme catalyses H2O(in) = H2O(out). It catalyses the reaction nitric oxide(out) = nitric oxide(in). The catalysed reaction is CO2(out) = CO2(in). It carries out the reaction glycerol(in) = glycerol(out). The enzyme catalyses H2O2(out) = H2O2(in). It catalyses the reaction K(+)(in) = K(+)(out). The catalysed reaction is Na(+)(in) = Na(+)(out). In terms of biological role, forms a water channel that facilitates the transport of water across cell membranes, playing a crucial role in water homeostasis in various tissues. Could also be permeable to small solutes including hydrogen peroxide, glycerol and gases such as amonnia (NH3), nitric oxide (NO) and carbon dioxide (CO2). Recruited to the ankyrin-1 complex, a multiprotein complex of the erythrocyte membrane, it could be part of a CO2 metabolon, linking facilitated diffusion of CO2 across the membrane, anion exchange of Cl(-)/HCO3(-) and interconversion of dissolved CO2 and carbonic acid in the cytosol. In vitro, it shows non-selective gated cation channel activity and may be permeable to cations like K(+) and Na(+) in vivo. This is Aquaporin-1 from Ovis aries (Sheep).